Consider the following 159-residue polypeptide: Troponin C, skeletal muscle (159 aa).

The residue at position 1 (threonine 1) is an N-acetylthreonine. 4 consecutive EF-hand domains span residues 14–49, 50–85, 90–125, and 126–159; these read EMIAEFKAAFDMFDADGGGDISVKELGTVMRMLGQT, PTKEELDAIIEEVDEDGSGTIDFEEFLVMMVRQMKE, KSEEELAECFRIFDRNMDGYIDAEELAEIFRASGEH, and VTDEEIESIMKDGDKNNDGRIDFDEFLKMMEGVQ. The Ca(2+) site is built by aspartate 27, aspartate 29, aspartate 33, glutamate 38, aspartate 63, aspartate 65, serine 67, threonine 69, glutamate 74, aspartate 103, asparagine 105, aspartate 107, tyrosine 109, glutamate 114, aspartate 139, asparagine 141, aspartate 143, arginine 145, and glutamate 150.

Belongs to the troponin C family.

In terms of biological role, troponin is the central regulatory protein of striated muscle contraction. Tn consists of three components: Tn-I which is the inhibitor of actomyosin ATPase, Tn-T which contains the binding site for tropomyosin and Tn-C. The binding of calcium to Tn-C abolishes the inhibitory action of Tn on actin filaments. In Sus scrofa (Pig), this protein is Troponin C, skeletal muscle (TNNC2).